The following is a 241-amino-acid chain: Cobalt transport protein CbiM (241 aa).

The signal sequence occupies residues 1–23; that stretch reads MKKNLTFFMVIALLFTITPNVYA. Transmembrane regions (helical) follow at residues 29–49, 66–86, 98–118, 121–141, 160–180, and 202–222; these read GFLPPMWSGVYFVISAPFIII, MLLGLVAAYAFILSAMKIPSV, LSAIIFGPFISAIVGLIVLIF, ILLAHGGITTLGANTLSMGIM, VAVFLAATLGDLFTYFITSVQ, and IFSITQIPLAIMEGILTVIIF.

Belongs to the CbiM family. In terms of assembly, forms an energy-coupling factor (ECF) transporter complex composed of an ATP-binding protein (A component, CbiO), a transmembrane protein (T component, CbiQ) and 2 possible substrate-capture proteins (S components, CbiM and CbiN) of unknown stoichimetry.

The protein resides in the cell membrane. It participates in cofactor biosynthesis; adenosylcobalamin biosynthesis. Part of the energy-coupling factor (ECF) transporter complex CbiMNOQ involved in cobalt import. This chain is Cobalt transport protein CbiM, found in Clostridium tetani (strain Massachusetts / E88).